The sequence spans 65 residues: MKTKEIRSLSTDELLAKEKQYKEELFNLRFQQATGQLENTARLSQVRKNIARIKTILSEKELEQN.

It belongs to the universal ribosomal protein uL29 family.

This Lactobacillus delbrueckii subsp. bulgaricus (strain ATCC 11842 / DSM 20081 / BCRC 10696 / JCM 1002 / NBRC 13953 / NCIMB 11778 / NCTC 12712 / WDCM 00102 / Lb 14) protein is Large ribosomal subunit protein uL29.